Consider the following 77-residue polypeptide: UPF0291 protein BLi02035/BL02933 (77 aa).

Residues 57–77 (PEGNDVTPEKLKQEKRNRRLH) are disordered.

It belongs to the UPF0291 family.

Its subcellular location is the cytoplasm. This Bacillus licheniformis (strain ATCC 14580 / DSM 13 / JCM 2505 / CCUG 7422 / NBRC 12200 / NCIMB 9375 / NCTC 10341 / NRRL NRS-1264 / Gibson 46) protein is UPF0291 protein BLi02035/BL02933.